The primary structure comprises 88 residues: Small ribosomal subunit protein uS17 (88 aa).

Belongs to the universal ribosomal protein uS17 family. Part of the 30S ribosomal subunit.

One of the primary rRNA binding proteins, it binds specifically to the 5'-end of 16S ribosomal RNA. This Prochlorococcus marinus subsp. pastoris (strain CCMP1986 / NIES-2087 / MED4) protein is Small ribosomal subunit protein uS17.